The primary structure comprises 476 residues: RNA-binding protein 45 (476 aa).

A disordered region spans residues 1-20 (MDEAGSSASGGGFRPGVDSL). RRM domains lie at 26 to 106 (SRIF…IAQS) and 121 to 195 (TRIF…PKNK). Lysine 34 is covalently cross-linked (Glycyl lysine isopeptide (Lys-Gly) (interchain with G-Cter in SUMO2)). A phosphoserine mark is found at serine 199 and serine 464. In terms of domain architecture, RRM 3 spans 392 to 464 (ERLFIVFNPH…VRLKVMLADS (73 aa)).

The protein resides in the cytoplasm. The protein localises to the nucleus. Functionally, RNA-binding protein with binding specificity for poly(C). May play an important role in neural development. This chain is RNA-binding protein 45 (RBM45), found in Homo sapiens (Human).